The chain runs to 33 residues: PSHVRRKIMSWPLSKELRQKYSVRSMPIRKDDE.

Belongs to the universal ribosomal protein uL24 family. Component of the large ribosomal subunit.

It localises to the cytoplasm. Component of the large ribosomal subunit. The ribosome is a large ribonucleoprotein complex responsible for the synthesis of proteins in the cell. The chain is Large ribosomal subunit protein uL24 (rpl26) from Xenopus laevis (African clawed frog).